Reading from the N-terminus, the 59-residue chain is Large ribosomal subunit protein bL32 (59 aa).

The disordered stretch occupies residues 1-25 (MAVQQNKKSPSKRGMHRAHDFLTAP).

The protein belongs to the bacterial ribosomal protein bL32 family.

The chain is Large ribosomal subunit protein bL32 from Azoarcus sp. (strain BH72).